We begin with the raw amino-acid sequence, 30 residues long: Thaumatin-like protein (30 aa).

The protein belongs to the thaumatin family.

The protein resides in the secreted. Its function is as follows. Has antifungal activity against C.comatus, F.oxysporum and P.ostreatus. The sequence is that of Thaumatin-like protein from Phaseolus vulgaris (Kidney bean).